Consider the following 262-residue polypeptide: 2-keto-4-pentenoate hydratase (262 aa).

It belongs to the hydratase/decarboxylase family. MhpD subfamily. The cofactor is a divalent metal cation.

The enzyme catalyses (S)-4-hydroxy-2-oxopentanoate = (2Z)-2-hydroxypenta-2,4-dienoate + H2O. It functions in the pathway aromatic compound metabolism; 3-phenylpropanoate degradation. In terms of biological role, catalyzes the conversion of 2-hydroxypentadienoic acid (enolic form of 2-oxopent-4-enoate) to 4-hydroxy-2-ketopentanoic acid. The sequence is that of 2-keto-4-pentenoate hydratase from Paraburkholderia phymatum (strain DSM 17167 / CIP 108236 / LMG 21445 / STM815) (Burkholderia phymatum).